The following is a 162-amino-acid chain: Shikimate kinase (162 aa).

Residue 11–16 (GSGKSS) coordinates ATP. Ser15 lines the Mg(2+) pocket. 3 residues coordinate substrate: Asp33, Arg57, and Gly80. Arg116 lines the ATP pocket. Residue Arg132 participates in substrate binding.

The protein belongs to the shikimate kinase family. In terms of assembly, monomer. Requires Mg(2+) as cofactor.

Its subcellular location is the cytoplasm. The catalysed reaction is shikimate + ATP = 3-phosphoshikimate + ADP + H(+). Its pathway is metabolic intermediate biosynthesis; chorismate biosynthesis; chorismate from D-erythrose 4-phosphate and phosphoenolpyruvate: step 5/7. In terms of biological role, catalyzes the specific phosphorylation of the 3-hydroxyl group of shikimic acid using ATP as a cosubstrate. The protein is Shikimate kinase of Helicobacter acinonychis (strain Sheeba).